Consider the following 109-residue polypeptide: Nucleoid-associated protein VC_1055 (109 aa).

The disordered stretch occupies residues 1-22; the sequence is MFGKGGMGNLMKQAQQMQERMQ.

It belongs to the YbaB/EbfC family. As to quaternary structure, homodimer.

Its subcellular location is the cytoplasm. The protein localises to the nucleoid. In terms of biological role, binds to DNA and alters its conformation. May be involved in regulation of gene expression, nucleoid organization and DNA protection. The polypeptide is Nucleoid-associated protein VC_1055 (Vibrio cholerae serotype O1 (strain ATCC 39315 / El Tor Inaba N16961)).